The chain runs to 365 residues: Probable dual-specificity RNA methyltransferase RlmN (365 aa).

E108 serves as the catalytic Proton acceptor. Residues 114 to 352 form the Radical SAM core domain; sequence YPDRNTVCIS…SCTVRDTRGR (239 aa). C121 and C358 are joined by a disulfide. [4Fe-4S] cluster-binding residues include C128, C132, and C135. Residues 179-180, S213, 236-238, and N315 contribute to the S-adenosyl-L-methionine site; these read GE and SLH. C358 (S-methylcysteine intermediate) is an active-site residue.

Belongs to the radical SAM superfamily. RlmN family. Requires [4Fe-4S] cluster as cofactor.

The protein resides in the cytoplasm. It carries out the reaction adenosine(2503) in 23S rRNA + 2 reduced [2Fe-2S]-[ferredoxin] + 2 S-adenosyl-L-methionine = 2-methyladenosine(2503) in 23S rRNA + 5'-deoxyadenosine + L-methionine + 2 oxidized [2Fe-2S]-[ferredoxin] + S-adenosyl-L-homocysteine. The catalysed reaction is adenosine(37) in tRNA + 2 reduced [2Fe-2S]-[ferredoxin] + 2 S-adenosyl-L-methionine = 2-methyladenosine(37) in tRNA + 5'-deoxyadenosine + L-methionine + 2 oxidized [2Fe-2S]-[ferredoxin] + S-adenosyl-L-homocysteine. Specifically methylates position 2 of adenine 2503 in 23S rRNA and position 2 of adenine 37 in tRNAs. This chain is Probable dual-specificity RNA methyltransferase RlmN, found in Mycolicibacterium gilvum (strain PYR-GCK) (Mycobacterium gilvum (strain PYR-GCK)).